The primary structure comprises 105 residues: Phosphoribosyl-ATP pyrophosphatase (105 aa).

The protein belongs to the PRA-PH family.

It localises to the cytoplasm. It carries out the reaction 1-(5-phospho-beta-D-ribosyl)-ATP + H2O = 1-(5-phospho-beta-D-ribosyl)-5'-AMP + diphosphate + H(+). The protein operates within amino-acid biosynthesis; L-histidine biosynthesis; L-histidine from 5-phospho-alpha-D-ribose 1-diphosphate: step 2/9. The chain is Phosphoribosyl-ATP pyrophosphatase from Roseobacter denitrificans (strain ATCC 33942 / OCh 114) (Erythrobacter sp. (strain OCh 114)).